We begin with the raw amino-acid sequence, 189 residues long: Threonylcarbamoyl-AMP synthase (189 aa).

Residues 6–189 (TAIFTPIIDA…VLTGEQIRQG (184 aa)) form the YrdC-like domain.

The protein belongs to the SUA5 family. TsaC subfamily.

The protein resides in the cytoplasm. It catalyses the reaction L-threonine + hydrogencarbonate + ATP = L-threonylcarbamoyladenylate + diphosphate + H2O. Functionally, required for the formation of a threonylcarbamoyl group on adenosine at position 37 (t(6)A37) in tRNAs that read codons beginning with adenine. Catalyzes the conversion of L-threonine, HCO(3)(-)/CO(2) and ATP to give threonylcarbamoyl-AMP (TC-AMP) as the acyladenylate intermediate, with the release of diphosphate. The sequence is that of Threonylcarbamoyl-AMP synthase from Serratia proteamaculans (strain 568).